The primary structure comprises 127 residues: Calcitonin receptor-stimulating peptide 1 (127 aa).

The first 25 residues, 1-25 (MGFWKFSPFLVLGILALYQVGFLQA), serve as a signal peptide directing secretion. The propeptide occupies 26 to 79 (APFRSALENPPDSGVRNEEELRLLLAAVMKDYMQMKTHELEQEQETEGSRVAVQ). C83 and C88 form a disulfide bridge.

The protein belongs to the calcitonin family.

The protein localises to the secreted. Stimulates cAMP production in porcine kidney cell line LLC-PK1 via the calcitonin receptor (CT) but not via the CT-like (CL) receptor. This Canis lupus familiaris (Dog) protein is Calcitonin receptor-stimulating peptide 1 (CRSP1).